The chain runs to 157 residues: uncharacterized protein (157 aa).

The HTH marR-type domain occupies 6–157 (HDELFQAIQQ…AFFNLWIKYM (152 aa)). A DNA-binding region (H-T-H motif) is located at residues 66-89 (NSFLASRLHISKAAVSKAVHALLK).

It is found in the cytoplasm. This is an uncharacterized protein from Bacillus subtilis (strain 168).